Reading from the N-terminus, the 96-residue chain is Aspartyl/glutamyl-tRNA(Asn/Gln) amidotransferase subunit C (96 aa).

The protein belongs to the GatC family. In terms of assembly, heterotrimer of A, B and C subunits.

It carries out the reaction L-glutamyl-tRNA(Gln) + L-glutamine + ATP + H2O = L-glutaminyl-tRNA(Gln) + L-glutamate + ADP + phosphate + H(+). The catalysed reaction is L-aspartyl-tRNA(Asn) + L-glutamine + ATP + H2O = L-asparaginyl-tRNA(Asn) + L-glutamate + ADP + phosphate + 2 H(+). Functionally, allows the formation of correctly charged Asn-tRNA(Asn) or Gln-tRNA(Gln) through the transamidation of misacylated Asp-tRNA(Asn) or Glu-tRNA(Gln) in organisms which lack either or both of asparaginyl-tRNA or glutaminyl-tRNA synthetases. The reaction takes place in the presence of glutamine and ATP through an activated phospho-Asp-tRNA(Asn) or phospho-Glu-tRNA(Gln). The polypeptide is Aspartyl/glutamyl-tRNA(Asn/Gln) amidotransferase subunit C (Bacillus cytotoxicus (strain DSM 22905 / CIP 110041 / 391-98 / NVH 391-98)).